The following is a 140-amino-acid chain: UPF0336 protein TW736 (140 aa).

Belongs to the UPF0336 family.

This Tropheryma whipplei (strain TW08/27) (Whipple's bacillus) protein is UPF0336 protein TW736.